Reading from the N-terminus, the 525-residue chain is Acyl-lipid (9-3)-desaturase (525 aa).

The Cytochrome b5 heme-binding domain occupies 102–176; the sequence is KSTHPLSEVA…LQDFYIGDVE (75 aa). Heme contacts are provided by His137 and His159. Residues 216–236 traverse the membrane as a helical segment; it reads VAIFAASIAIICWSKTISAVL. The Histidine box-1 signature appears at 254 to 258; that stretch reads HDFLH. The helical transmembrane segment at 266–286 threads the bilayer; sequence WLNEVVGYVIGNAVLGFSTGW. A Histidine box-2 motif is present at residues 291–295; sequence HNLHH. Transmembrane regions (helical) follow at residues 340-360, 378-398, and 401-421; these read QHLFFMGLLFFARGSWLFWSW, GTVLFHYFWFVGTACYLLPGW, and LVWMAVTELMSGMLLGFVFVL. Positions 462–466 match the Histidine box-3 motif; it reads QIEHH.

It belongs to the fatty acid desaturase type 1 family.

It localises to the membrane. The catalysed reaction is (9Z,12Z,15Z)-octadecatrienoyl-containing glycerolipid + 2 Fe(II)-[cytochrome b5] + O2 + 2 H(+) = (6Z,9Z,12Z,15Z)-octadecatetraenoyl-containing glycerolipid + 2 Fe(III)-[cytochrome b5] + 2 H2O. The enzyme catalyses a (9Z,12Z)-octadecadienoyl-containing glycerolipid + 2 Fe(II)-[cytochrome b5] + O2 + 2 H(+) = (6Z,9Z,12Z)-octadecatrienoyl-containing glycerolipid + 2 Fe(III)-[cytochrome b5] + 2 H2O. Its pathway is lipid metabolism; polyunsaturated fatty acid biosynthesis. In terms of biological role, fatty acid desaturase able to introduce a delta(6)-double bond into delta(9)-unsaturated fatty-acid substrates. Can use both linoleic acid (18:2(9Z,12Z)) and alpha-linolenic acid (18:3(9Z,12Z,15Z)) as substrates. Required for the biosynthesis of arachidonic acid (20:4(5z,8Z,11Z,14Z)). In Physcomitrium patens (Spreading-leaved earth moss), this protein is Acyl-lipid (9-3)-desaturase.